Consider the following 167-residue polypeptide: Ribosome rescue factor SmrB (167 aa).

The Smr domain maps to 91-166 (LDLHGLTREQ…GEAAILILVD (76 aa)).

The protein belongs to the SmrB family. In terms of assembly, associates with collided ribosomes, but not with correctly translating polysomes.

Acts as a ribosome collision sensor. Detects stalled/collided disomes (pairs of ribosomes where the leading ribosome is stalled and a second ribosome has collided with it) and endonucleolytically cleaves mRNA at the 5' boundary of the stalled ribosome. Stalled/collided disomes form a new interface (primarily via the 30S subunits) that binds SmrB. Cleaved mRNA becomes available for tmRNA ligation, leading to ribosomal subunit dissociation and rescue of stalled ribosomes. The chain is Ribosome rescue factor SmrB from Haemophilus influenzae (strain ATCC 51907 / DSM 11121 / KW20 / Rd).